Reading from the N-terminus, the 229-residue chain is Large ribosomal subunit protein uL1 (229 aa).

This sequence belongs to the universal ribosomal protein uL1 family. As to quaternary structure, part of the 50S ribosomal subunit.

In terms of biological role, binds directly to 23S rRNA. The L1 stalk is quite mobile in the ribosome, and is involved in E site tRNA release. Functionally, protein L1 is also a translational repressor protein, it controls the translation of the L11 operon by binding to its mRNA. In Latilactobacillus sakei subsp. sakei (strain 23K) (Lactobacillus sakei subsp. sakei), this protein is Large ribosomal subunit protein uL1.